The primary structure comprises 265 residues: MKSVLGFKKAKANREKISMVTCYDYTLAKIINSTDIDCILVGDSGGMVLLGKKNTTYTTLDDMQFMTQAVANGATDKFIVADLPFMSYRQSLEITMQAVTTLIQSGAHAIKLEGSSGNLDIIKHIVNSGVPVMGHIGMTPQFINSFGGFKVQGRTEEAAKHLLEEAKLLEQAGCFGIVLECIPANIAKDITQNLDIPTIGIGAGSNTDGQILVLQDMLGMNTDFQPKFVKKYIDGSKLFSDAINTYVKETKANTFPTKEHCYDYC.

Mg(2+) contacts are provided by Asp43 and Asp82. Residues 43-44 (DS), Asp82, and Lys111 contribute to the 3-methyl-2-oxobutanoate site. Glu113 is a Mg(2+) binding site. Catalysis depends on Glu180, which acts as the Proton acceptor.

This sequence belongs to the PanB family. Homodecamer; pentamer of dimers. It depends on Mg(2+) as a cofactor.

The protein localises to the cytoplasm. The catalysed reaction is 3-methyl-2-oxobutanoate + (6R)-5,10-methylene-5,6,7,8-tetrahydrofolate + H2O = 2-dehydropantoate + (6S)-5,6,7,8-tetrahydrofolate. Its pathway is cofactor biosynthesis; (R)-pantothenate biosynthesis; (R)-pantoate from 3-methyl-2-oxobutanoate: step 1/2. Catalyzes the reversible reaction in which hydroxymethyl group from 5,10-methylenetetrahydrofolate is transferred onto alpha-ketoisovalerate to form ketopantoate. The protein is 3-methyl-2-oxobutanoate hydroxymethyltransferase of Francisella tularensis subsp. novicida (strain U112).